A 509-amino-acid polypeptide reads, in one-letter code: Cytochrome P450 monooxygenase traB (509 aa).

Residues 8-28 (LVELVSITGGLIVLFIAYTGF) traverse the membrane as a helical segment. Cysteine 453 lines the heme pocket.

It belongs to the cytochrome P450 family. It depends on heme as a cofactor.

Its subcellular location is the membrane. Its pathway is secondary metabolite biosynthesis. In terms of biological role, cytochrome P450 monooxygenase; part of the tra gene cluster that produces terrestric acid. The clavatol biosynthesis cluster cla and the terrestric acid cluster tra are both involved in the production of peniphenones and penilactones. The non-reducing PKS claF is responsible for the formation of clavatol from successive condensations of 3 malonyl-CoA units, presumably with a simple acetyl-CoA starter unit, and 2 methylation steps. The esterase claE probably collaborates with claF by catalyzing the hydrolysis of ACP-bound acyl intermediates to free the ACP from stalled intermediates. The clavatol oxidase claD then converts clavatol to hydroxyclavatol. Spontaneous dehydration of hydroxyclavatol leads to the accumulation of the highly active ortho-quinone methide. On the other hand, the PKS-NRPS hybrid traA is involved in the formation of crustosic acid, with the help of traB and traD. The polyketide synthase module (PKS) of traA is responsible for the synthesis of the polyketide backbone via the condensation of an acetyl-CoA starter unit with 3 malonyl-CoA units. The downstream nonribosomal peptide synthetase (NRPS) module then amidates the carboxyl end of the polyketide with L-malic acid. Because traA lacks a designated enoylreductase (ER) domain, the required activity is provided the enoyl reductase traG. Crustosic acid undergoes decarboxylation and isomerization to the terrestric acid, catalyzed by the 2-oxoglutarate-dependent dioxygenase traH. Both acids are further converted to the 2 gamma-butyrolactones (R)-5-methyltetronic acid and (S)-5-carboxylmethyltetronic acid, with involvement of the cytochrome P450 monooxygenase claJ. Spontaneous addition of the methide to these gamma-butyrolactones leads to peniphenone D and penilactone D, which undergo again stereospecific attacking by methide to give penilactones A and B. This chain is Cytochrome P450 monooxygenase traB, found in Penicillium crustosum (Blue mold fungus).